The primary structure comprises 170 residues: Type II secretion system protein H (170 aa).

Residues 1–5 (MRQRG) constitute a propeptide, leader sequence. Phenylalanine 6 bears the N-methylphenylalanine mark. Residues 6 to 29 (FTLLEMMLILLLMGVSAGMVLLAF) traverse the membrane as a helical segment.

It belongs to the GSP H family. Type II secretion is composed of four main components: the outer membrane complex, the inner membrane complex, the cytoplasmic secretion ATPase and the periplasm-spanning pseudopilus. Interacts with core component PulG. In terms of processing, cleaved by prepilin peptidase. Post-translationally, methylated by prepilin peptidase at the amino group of the N-terminal phenylalanine once the leader sequence is cleaved by prepilin peptidase.

It localises to the cell inner membrane. In terms of biological role, component of the type II secretion system required for the energy-dependent secretion of extracellular factors such as proteases and toxins from the periplasm. Part of the pseudopilus tip complex that is critical for the recognition and binding of secretion substrates. The sequence is that of Type II secretion system protein H (pulH) from Klebsiella pneumoniae.